Here is a 257-residue protein sequence, read N- to C-terminus: MASPAMHPVLSAAVPRHIAIIMDGNGRWAQRRRRPRVIGHRAGARAVNRTIDFCLEKGVSALTLFAFSSENWGRPQDEVDALMKLFLHALDREVEELQRRGVQVRFIGDRSRFAAPLRDRMAGAERSTAANSRLVLSIAASYGGRQDIASAARALAEDVAAGRLQPEQIDEALLSSRVALADLPAPDLFIRTGGDTRISNFLLWQLAYTELWFTETLWPEFDAGVLQQALDDYAGRERRFGLTSAQIADKATESSSA.

The active site involves aspartate 23. Aspartate 23 is a Mg(2+) binding site. Substrate contacts are provided by residues 24–27 (GNGR), tryptophan 28, arginine 36, histidine 40, and 68–70 (SSE). Asparagine 71 acts as the Proton acceptor in catalysis. Substrate contacts are provided by residues tryptophan 72, arginine 74, arginine 191, and 197–199 (RIS). Mg(2+) is bound at residue glutamate 210.

Belongs to the UPP synthase family. In terms of assembly, homodimer. It depends on Mg(2+) as a cofactor.

The enzyme catalyses 8 isopentenyl diphosphate + (2E,6E)-farnesyl diphosphate = di-trans,octa-cis-undecaprenyl diphosphate + 8 diphosphate. Catalyzes the sequential condensation of isopentenyl diphosphate (IPP) with (2E,6E)-farnesyl diphosphate (E,E-FPP) to yield (2Z,6Z,10Z,14Z,18Z,22Z,26Z,30Z,34E,38E)-undecaprenyl diphosphate (di-trans,octa-cis-UPP). UPP is the precursor of glycosyl carrier lipid in the biosynthesis of bacterial cell wall polysaccharide components such as peptidoglycan and lipopolysaccharide. This Xanthomonas axonopodis pv. citri (strain 306) protein is Ditrans,polycis-undecaprenyl-diphosphate synthase ((2E,6E)-farnesyl-diphosphate specific).